A 100-amino-acid chain; its full sequence is Large ribosomal subunit protein uL23 (100 aa).

This sequence belongs to the universal ribosomal protein uL23 family. In terms of assembly, part of the 50S ribosomal subunit. Contacts protein L29, and trigger factor when it is bound to the ribosome.

In terms of biological role, one of the early assembly proteins it binds 23S rRNA. One of the proteins that surrounds the polypeptide exit tunnel on the outside of the ribosome. Forms the main docking site for trigger factor binding to the ribosome. The chain is Large ribosomal subunit protein uL23 from Synechococcus sp. (strain CC9311).